Here is a 407-residue protein sequence, read N- to C-terminus: Serine hydroxymethyltransferase (407 aa).

Residues L117 and 121-123 (GHL) contribute to the (6S)-5,6,7,8-tetrahydrofolate site. K226 carries the post-translational modification N6-(pyridoxal phosphate)lysine. E242 is a binding site for (6S)-5,6,7,8-tetrahydrofolate.

It belongs to the SHMT family. Homodimer. It depends on pyridoxal 5'-phosphate as a cofactor.

It localises to the cytoplasm. It catalyses the reaction (6R)-5,10-methylene-5,6,7,8-tetrahydrofolate + glycine + H2O = (6S)-5,6,7,8-tetrahydrofolate + L-serine. Its pathway is one-carbon metabolism; tetrahydrofolate interconversion. It functions in the pathway amino-acid biosynthesis; glycine biosynthesis; glycine from L-serine: step 1/1. In terms of biological role, catalyzes the reversible interconversion of serine and glycine with tetrahydrofolate (THF) serving as the one-carbon carrier. This reaction serves as the major source of one-carbon groups required for the biosynthesis of purines, thymidylate, methionine, and other important biomolecules. Also exhibits THF-independent aldolase activity toward beta-hydroxyamino acids, producing glycine and aldehydes, via a retro-aldol mechanism. The protein is Serine hydroxymethyltransferase of Thermus thermophilus (strain ATCC BAA-163 / DSM 7039 / HB27).